We begin with the raw amino-acid sequence, 415 residues long: Peptide chain release factor subunit 1-2 (415 aa).

This sequence belongs to the eukaryotic release factor 1 family. In terms of assembly, heterodimer of two subunits, one of which binds GTP.

The protein resides in the cytoplasm. Its function is as follows. Directs the termination of nascent peptide synthesis (translation) in response to the termination codons UAA, UAG and UGA. The sequence is that of Peptide chain release factor subunit 1-2 from Methanosarcina acetivorans (strain ATCC 35395 / DSM 2834 / JCM 12185 / C2A).